The sequence spans 187 residues: Glutathione peroxidase 7 (187 aa).

Positions 1 to 19 (MVAATVAAAWLLLWAAACA) are cleaved as a signal peptide. The active site involves C57.

The protein belongs to the glutathione peroxidase family. As to expression, expressed in esophageal epithelial cells; expression is up-regulated after exposure to acidic bile acids.

It localises to the secreted. It catalyses the reaction 2 glutathione + H2O2 = glutathione disulfide + 2 H2O. Functionally, it protects esophageal epithelia from hydrogen peroxide-induced oxidative stress. It suppresses acidic bile acid-induced reactive oxygen species (ROS) and protects against oxidative DNA damage and double-strand breaks. The polypeptide is Glutathione peroxidase 7 (GPX7) (Homo sapiens (Human)).